A 282-amino-acid polypeptide reads, in one-letter code: Serine/arginine-rich splicing factor 8 (282 aa).

Ser2 bears the N-acetylserine mark. Residues Ser2 and Ser26 each carry the phosphoserine modification. Residues 14–92 enclose the RRM domain; it reads ITLKVDNLTY…RELRVQVARY (79 aa). The disordered stretch occupies residues 91-282; the sequence is RYGRRDLPRS…SPEEEGQMSS (192 aa). The segment covering 93-107 has biased composition (basic and acidic residues); that stretch reads GRRDLPRSRQGEPRG. Composition is skewed to basic residues over residues 116–136 and 144–154; these read RRSR…RSRS and SRSRSRYRGSR. Composition is skewed to low complexity over residues 155–177 and 185–200; these read YSRS…PYSR and YGGS…NSRY. Phosphoserine is present on residues Ser156, Ser158, Ser171, Ser173, and Ser196. Positions 201–210 are enriched in basic residues; the sequence is SRYHSSRSHS. Low complexity-rich tracts occupy residues 211–227 and 234–255; these read KSGS…SKSS and SSSV…SPPR. The span at 256 to 271 shows a compositional bias: basic residues; the sequence is VSKRKSKSRSRSKRPP. Ser273 carries the phosphoserine modification.

Belongs to the splicing factor SR family. In terms of tissue distribution, strongly expressed in pancreas, spleen and prostate. Weakly expressed in lung, liver and thymus.

Its subcellular location is the nucleus. In terms of biological role, involved in pre-mRNA alternative splicing. This is Serine/arginine-rich splicing factor 8 (SRSF8) from Homo sapiens (Human).